A 196-amino-acid polypeptide reads, in one-letter code: Cupin-domain-containing oxidoreductase srdB (196 aa).

One can recognise a Cupin type-2 domain in the interval Asp-92–Leu-156.

Belongs to the virC family.

Its function is as follows. Cupin-domain-containing oxidoreductase; part of the gene cluster that mediates the biosynthesis of sordarial, a salicylic aldehyde structurally related to the phytotoxin pyriculol. The most interesting aspect of this pathway is formation of an aromatic product from the highly reducing polyketide synthase srdA. SrdA synthesizes a reduced polyketide chain from one molecule of acetyl-CoA and five molecules of malonyl-CoA. The polyketide chain is then reductively released as an aldehyde. The oxidoreductases srdC, srdD and srdE then oxidize one of the hydroxy groups to facilitate the intramolecular aldol condensation, followed by dehydration to yield a salicylic aldehyde. This aldehyde can undergo facile reduction by endogenous reductases to yield the alcohol 1-hydroxy-2-hydroxymethyl-3-pent-1,3-dienylbenzene. The flavin-dependent srdI counteract against the propensity of the aldehydes to be reduced under physiological conditions and is responsible for reoxidizing 1-hydroxy-2-hydroxymethyl-3-pent-1,3-dienylbenzene back to the salicylic aldehyde. This salicylic aldehyde is then selectively epoxidized by the cupin-domain-containing oxidoreductase srdB to yield the epoxide, which can be hydrolyzed stereoselectively by the hydrolase srdG to give the final product sordarial. This Neurospora crassa (strain ATCC 24698 / 74-OR23-1A / CBS 708.71 / DSM 1257 / FGSC 987) protein is Cupin-domain-containing oxidoreductase srdB.